A 551-amino-acid polypeptide reads, in one-letter code: Dol-P-Man:Man(7)GlcNAc(2)-PP-Dol alpha-1,6-mannosyltransferase (551 aa).

At Met1–Arg2 the chain is on the lumenal side. A helical membrane pass occupies residues Trp3 to Phe23. Over Thr24–Thr61 the chain is Cytoplasmic. Residues Phe62–Ile82 traverse the membrane as a helical segment. At Gln83–Ser89 the chain is on the lumenal side. A helical membrane pass occupies residues Ile90–Tyr110. Topologically, residues Leu111–Tyr136 are cytoplasmic. A helical transmembrane segment spans residues Ile137–Phe157. The Lumenal segment spans residues Tyr158–Gly178. A helical membrane pass occupies residues Trp179–Phe199. At Arg200 to Glu202 the chain is on the cytoplasmic side. Residues Val203 to Phe223 traverse the membrane as a helical segment. Residues Asp224–Lys227 are Lumenal-facing. The helical transmembrane segment at Phe228–Trp248 threads the bilayer. The Cytoplasmic portion of the chain corresponds to Gln249–Pro275. A helical transmembrane segment spans residues Val276 to Leu296. The Lumenal segment spans residues Asn297–Leu303. A helical membrane pass occupies residues Ala304–Phe324. Topologically, residues Gln325–Arg331 are cytoplasmic. A helical transmembrane segment spans residues Phe332–Trp352. Residues Glu353–Cys365 lie on the Lumenal side of the membrane. The chain crosses the membrane as a helical span at residues Leu366 to Ile386. Residues Ser387 to Ser417 are Cytoplasmic-facing. Residues Ile418–Ile438 traverse the membrane as a helical segment. At Asn439–Asp551 the chain is on the lumenal side.

It belongs to the glycosyltransferase 22 family.

The protein resides in the endoplasmic reticulum membrane. It catalyses the reaction an alpha-D-Man-(1-&gt;2)-alpha-D-Man-(1-&gt;2)-alpha-D-Man-(1-&gt;3)-[alpha-D-Man-(1-&gt;2)-alpha-D-Man-(1-&gt;3)-alpha-D-Man-(1-&gt;6)]-beta-D-Man-(1-&gt;4)-beta-D-GlcNAc-(1-&gt;4)-alpha-D-GlcNAc-diphospho-di-trans,poly-cis-dolichol + a di-trans,poly-cis-dolichyl beta-D-mannosyl phosphate = an alpha-D-Man-(1-&gt;2)-alpha-D-Man-(1-&gt;2)-alpha-D-Man-(1-&gt;3)-[alpha-D-Man-(1-&gt;2)-alpha-D-Man-(1-&gt;3)-[alpha-D-Man-(1-&gt;6)]-alpha-D-Man-(1-&gt;6)]-beta-D-Man-(1-&gt;4)-beta-D-GlcNAc-(1-&gt;4)-alpha-D-GlcNAc-diphospho-di-trans,poly-cis-dolichol + a di-trans,poly-cis-dolichyl phosphate + H(+). It functions in the pathway protein modification; protein glycosylation. In terms of biological role, mannosyltransferase that operates in the biosynthetic pathway of dolichol-linked oligosaccharides, the glycan precursors employed in protein asparagine (N)-glycosylation. The assembly of dolichol-linked oligosaccharides begins on the cytosolic side of the endoplasmic reticulum membrane and finishes in its lumen. The sequential addition of sugars to dolichol pyrophosphate produces dolichol-linked oligosaccharides containing fourteen sugars, including two GlcNAcs, nine mannoses and three glucoses. Once assembled, the oligosaccharide is transferred from the lipid to nascent proteins by oligosaccharyltransferases. In the lumen of the endoplasmic reticulum, adds the eighth mannose residue in an alpha-1,6 linkage onto Man(7)GlcNAc(2)-PP-dolichol to produce Man(8)GlcNAc(2)-PP-dolichol. This is Dol-P-Man:Man(7)GlcNAc(2)-PP-Dol alpha-1,6-mannosyltransferase (ALG12) from Saccharomyces cerevisiae (strain ATCC 204508 / S288c) (Baker's yeast).